The sequence spans 313 residues: Ribosomal RNA small subunit methyltransferase H (313 aa).

Residues 36–38 (GGH), Asp-56, Phe-80, Asp-102, and Gln-109 each bind S-adenosyl-L-methionine.

Belongs to the methyltransferase superfamily. RsmH family.

It is found in the cytoplasm. The catalysed reaction is cytidine(1402) in 16S rRNA + S-adenosyl-L-methionine = N(4)-methylcytidine(1402) in 16S rRNA + S-adenosyl-L-homocysteine + H(+). Functionally, specifically methylates the N4 position of cytidine in position 1402 (C1402) of 16S rRNA. The sequence is that of Ribosomal RNA small subunit methyltransferase H from Actinobacillus pleuropneumoniae serotype 7 (strain AP76).